A 247-amino-acid polypeptide reads, in one-letter code: MyoD family inhibitor domain-containing protein (247 aa).

Disordered regions lie at residues 1–67 and 80–110; these read MSCA…NPSA and QLQTSAQEPGKEETGKIKNGGHTRMSNGNGI. In terms of domain architecture, MDFI spans 74–247; sequence QPERLPQLQT…MECCGICFPS (174 aa). Residues Ser129 and Ser141 each carry the phosphoserine modification.

The protein belongs to the MDFI family. In terms of assembly, interacts with HAND1; the interaction sequesters Hand1 into the nucleolus and inhibits its activity. Interacts (via C-terminus) with ZIC2. Interacts (via C-terminus) with AXIN1, the histidine-rich region of CCNT1/cyclin-T and weakly with LEF1. Interacts with CCNT2. Interacts with GATA2. Interacts (via C-terminus) with Piezo channel composed of PIEZO1 or PIEZO2; the interaction prolongs Piezo channel inactivation. Palmitoylated. In terms of tissue distribution, in the embryo, robust expression is detected between 16.5 and 18.5 dpc in lung, kidney, and salivary glands. In the developing cardiovascular system, it is detected in lymphatic and cardiac valves (at protein level).

Its subcellular location is the cytoplasm. It is found in the secreted. Functionally, required to control the activity of various transcription factors through their sequestration in the cytoplasm. Retains nuclear Zic proteins ZIC1, ZIC2 and ZIC3 in the cytoplasm and inhibits their transcriptional activation. Modulates the expression from cellular promoters. Binds to the axin complex, resulting in an increase in the level of free beta-catenin. Affects axin-regulation of the WNT and JNK signaling pathways. Involved in the development of lymphatic vessel valves. Required to promote lymphatic endothelial cell migration, in a process that involves down-regulation of integrin beta 1 activation and control of cell adhesion to the extracellular matrix. Regulates the activity of mechanosensitive Piezo channel. This Mus musculus (Mouse) protein is MyoD family inhibitor domain-containing protein.